Consider the following 128-residue polypeptide: MGVYQGRDLRKITGGKKNVSRGKRKFEIGSQPTETKVYSEDIREKARVLGGNAKVRLTYAAYANVINLSDGTAKKVKILEVIESSANREYARRGIIVKGSIIRTEIGKALVTSRPGQHGVINAILMQQ.

This sequence belongs to the eukaryotic ribosomal protein eS8 family. In terms of assembly, part of the 30S ribosomal subunit.

The protein is Small ribosomal subunit protein eS8 of Metallosphaera sedula (strain ATCC 51363 / DSM 5348 / JCM 9185 / NBRC 15509 / TH2).